The sequence spans 65 residues: Weak toxin CM-10 (65 aa).

5 disulfides stabilise this stretch: C3/C24, C6/C11, C17/C42, C46/C57, and C58/C63.

It belongs to the three-finger toxin family. Ancestral subfamily. Orphan group II sub-subfamily. Expressed by the venom gland.

Its subcellular location is the secreted. Functionally, binds with low affinity to muscular (alpha-1-beta-1-delta-epsilon/CHRNA1-CHRNB1-CHRND-CHRNE) and very low affinity to neuronal (alpha-7/CHRNA7) nicotinic acetylcholine receptor (nAChR). This chain is Weak toxin CM-10, found in Naja nivea (Cape cobra).